The chain runs to 433 residues: GPI mannosyltransferase 2 (433 aa).

Transmembrane regions (helical) follow at residues 4 to 24 (LVKPVLFFVVVRIVQYAIISL), 109 to 129 (TAVILENLIYFMAMITLFYLT), 148 to 165 (ATFTAILFSCNSGSGFFT), 172 to 194 (LSFLFSFLGILAREFSVTPIIPY), 204 to 226 (FYYTIVSSFCFTIATLNRSNCIL), 247 to 267 (ALLFPVLAGCIVALFFVRQQF), 322 to 342 (IPNFLFGLPTFVILFSSTFYF), 354 to 374 (LIFITRAFTIIILLFAHVQII), and 410 to 430 (GYIYWLIFWVPIQTSLFVFFL).

Belongs to the PIGV family.

Its subcellular location is the endoplasmic reticulum membrane. It functions in the pathway glycolipid biosynthesis; glycosylphosphatidylinositol-anchor biosynthesis. Functionally, mannosyltransferase involved in glycosylphosphatidylinositol-anchor biosynthesis. Transfers the second mannose to the glycosylphosphatidylinositol during GPI precursor assembly. The chain is GPI mannosyltransferase 2 (GPI18) from Candida glabrata (strain ATCC 2001 / BCRC 20586 / JCM 3761 / NBRC 0622 / NRRL Y-65 / CBS 138) (Yeast).